Consider the following 717-residue polypeptide: P-loop NTPase domain-containing protein LPA1 homolog 2 (717 aa).

2 disordered regions span residues 235–259 (KKLKGSRGVNSNAQKTDAGSNSSTT) and 532–629 (HYSS…DTIS). 2 stretches are compositionally biased toward polar residues: residues 243 to 259 (VNSNAQKTDAGSNSSTT) and 532 to 545 (HYSSCCSSPRTSDG). Acidic residues predominate over residues 559–582 (SDEDDEEGDDDFHEPDSDEDLSDN). Residues 583-602 (NDERNRDEIGSVDEESTKSD) show a composition bias toward basic and acidic residues.

In terms of biological role, may be not required for the accumulation of phytic acid in seeds. Phytic acid is the primary storage form of phosphorus in cereal grains and other plant seeds. The sequence is that of P-loop NTPase domain-containing protein LPA1 homolog 2 from Arabidopsis thaliana (Mouse-ear cress).